The chain runs to 1832 residues: Putative transcription factor capicua (1832 aa).

Residues serine 41 and serine 49 each carry the phosphoserine modification. Disordered stretches follow at residues alanine 66–serine 121, serine 135–histidine 227, glutamine 323–asparagine 353, asparagine 389–arginine 427, aspartate 444–proline 493, aspartate 563–glycine 619, arginine 690–glutamate 739, glutamine 784–proline 845, proline 874–glutamate 938, threonine 1069–cysteine 1105, glycine 1151–threonine 1178, aspartate 1457–alanine 1602, glutamine 1632–leucine 1668, leucine 1701–valine 1733, and alanine 1789–serine 1817. Residues asparagine 96–serine 121 show a composition bias toward low complexity. The span at proline 172–proline 186 shows a compositional bias: pro residues. Low complexity-rich tracts occupy residues proline 187 to serine 203, glutamine 211 to glutamine 223, and glutamine 323 to glutamine 342. A compositionally biased stretch (acidic residues) spans glutamate 397–phenylalanine 408. Polar residues predominate over residues glutamate 409–glutamine 422. A compositionally biased stretch (low complexity) spans alanine 446 to glutamine 484. A DNA-binding region (HMG box) is located at residues isoleucine 490–lysine 558. A compositionally biased stretch (gly residues) spans glycine 610–glycine 619. The interval glycine 834 to tyrosine 1832 is interaction with gro. Residues glutamate 903 to aspartate 914 are compositionally biased toward basic and acidic residues. Residues glutamine 915–glutamate 938 show a composition bias toward acidic residues. Over residues asparagine 1078–phenylalanine 1091 the composition is skewed to polar residues. Residues proline 1092–cysteine 1105 are compositionally biased toward low complexity. Residues glycine 1462–glycine 1471 are compositionally biased toward low complexity. The span at leucine 1503 to histidine 1525 shows a compositional bias: polar residues. The segment covering asparagine 1547–proline 1589 has biased composition (low complexity). A Phosphothreonine modification is found at threonine 1716. The segment covering aspartate 1724 to valine 1733 has biased composition (basic and acidic residues). The segment covering alanine 1789–asparagine 1799 has biased composition (polar residues). Residues threonine 1800–serine 1817 show a composition bias toward low complexity.

Interacts with gro. Expressed in the central region of embryos. Also expressed in ovarian follicle cells, the wing imaginal disks and the wing pouch.

It localises to the nucleus. Its function is as follows. Transcriptional repressor required for the specification of numerous cell types during embryonic development. Required for terminal patterning of early embryos. May associate with gro to repress tll and hkb, restricting their expression to embryonic terminal poles where they initiate correct development of head and tail structures. Required for dorsoventral patterning of oocytes and early embryos. Cooperates with dl to repress zen and other dorsal specific genes within the embryo and promotes expression of the ventralizing factor pip in ovarian follicle cells. Required during wing development for the specification of intervein areas, where it mediates localized repression of vein specific genes such as aos, dpp and vvl. This chain is Putative transcription factor capicua (cic), found in Drosophila melanogaster (Fruit fly).